A 477-amino-acid chain; its full sequence is Inositol phosphosphingolipids phospholipase C (477 aa).

At 1 to 398 the chain is on the cytoplasmic side; the sequence is MYNRKDRDVH…QRQKFFRGLH (398 aa). Residue glutamate 100 coordinates Mg(2+). Catalysis depends on histidine 334, which acts as the Proton acceptor. The chain crosses the membrane as a helical span at residues 399-417; sequence FWASILLLIASLVVTTFTA. The Mitochondrial intermembrane portion of the chain corresponds to 418–424; the sequence is NKAGWSS. A helical membrane pass occupies residues 425-449; it reads IFWVLFAIAVSISGTIDGAISFLFG. Topologically, residues 450–477 are cytoplasmic; sequence RSEIRALIEVEQEVLDAEHHLQTFLSEK.

Belongs to the neutral sphingomyelinase family. The cofactor is Mg(2+).

The protein localises to the endoplasmic reticulum membrane. It localises to the mitochondrion outer membrane. It carries out the reaction an N-acyl-(4R)-4-hydroxysphinganine-1-phosphoinositol + H2O = 1D-myo-inositol 1-phosphate + an N-acyl-(4R)-4-hydroxysphinganine + H(+). The catalysed reaction is a mannosylinositol-1-phospho-N-acyl-sphingoid base + H2O = mannosylinositol-1-phosphate + an N-acyl-sphingoid base + H(+). It catalyses the reaction an inositol phosphomannosylinositol-1-phospho-N-acyl-(4R)-4-hydroxysphinganine + H2O = mannosyldiinositol-1-phosphate + an N-acyl-(4R)-4-hydroxysphinganine + H(+). It participates in lipid metabolism; sphingolipid metabolism. With respect to regulation, activated through localization to mitochondria in specific growth phases. Responsible for the hydrolysis of the phosphosphingolipids (IPS), inositol phosphorylceramide (IPC), mannosylinositol phosphorylceramide (MIPC), and mannosyldiinositol phosphorylceramide (M(IP)2C). Regulates sphingolipid metabolism in mitochondria, especially the formation of alpha-hydroxylated very long chain phytoceramides. The generated ceramides contribute to the normal function of mitochondria. Also active on sphingomyelin (SM), but this activity is probably not physiologically relevant. In Saccharomyces cerevisiae (strain ATCC 204508 / S288c) (Baker's yeast), this protein is Inositol phosphosphingolipids phospholipase C.